Consider the following 337-residue polypeptide: Ribosomal RNA small subunit methyltransferase H (337 aa).

Residues 45–47 (GGH), aspartate 64, phenylalanine 91, aspartate 120, and glutamine 127 contribute to the S-adenosyl-L-methionine site.

This sequence belongs to the methyltransferase superfamily. RsmH family.

It is found in the cytoplasm. It catalyses the reaction cytidine(1402) in 16S rRNA + S-adenosyl-L-methionine = N(4)-methylcytidine(1402) in 16S rRNA + S-adenosyl-L-homocysteine + H(+). Functionally, specifically methylates the N4 position of cytidine in position 1402 (C1402) of 16S rRNA. The chain is Ribosomal RNA small subunit methyltransferase H from Corynebacterium glutamicum (strain R).